A 695-amino-acid polypeptide reads, in one-letter code: MAFETFSVALDKDKTLIFETGKIARQASGAVLVKMNETWVFSSACAASLSEAVGFLPFRVDYQEKFSSAGRTSGGFLKREGRPSEREILVSRLIDRSLRPSFPNRLMQDIQVLSYVWSYDGKTLPDPLAICGASAALAISEVPQNCIIAGVRVGLVGGKWVINPTRDELSASKLDLVMAGTASAVLMIEGHCDFLTEEQVLEAIAFGQTYIAKICDAIEAWQKAIGKQKNFSAVLDMPEDVQNVVSDFIREKFEKALSFRDKEALEQASKELEESVIANLVQEENSDFSLLNVKAAFKTAKSNQMRALIQDLGIRVDGRTTTEIRPISIETPLLPRTHGSCLFTRGETQSMAVCTLGGENMAQRFEDLNGDGAARFYLQYFFPPFSVGEVGRIGSPGRREIGHGKLAEKALSHVLPETSRFPYIIRLESNITESNGSSSMASVCGGCLALMDAGVPIKAPVAGIAMGLILDRDQAIILSDISGIEDHLGDMDFKVAGTAKGITAFQMDIKIEGITHKIMEQALAQAKQGRSHILNLMTQVLASPKGTVSKYAPRIETMQINTSKIATVIGPGGKQIRQIIERSGAQVDINDDGVINIAASTQESINKAKELIEGLTGEVEVGKVYNGRVTSIATFGVFVEVLPGKEGLCHISELSKQKVDNISDFVKEGDKLAVKLLSINEKGQLKLSHKATLED.

Aspartate 486 and aspartate 492 together coordinate Mg(2+). Positions 553-612 (PRIETMQINTSKIATVIGPGGKQIRQIIERSGAQVDINDDGVINIAASTQESINKAKELI) constitute a KH domain. Residues 622–690 (GKVYNGRVTS…EKGQLKLSHK (69 aa)) form the S1 motif domain.

This sequence belongs to the polyribonucleotide nucleotidyltransferase family. Mg(2+) serves as cofactor.

The protein localises to the cytoplasm. It catalyses the reaction RNA(n+1) + phosphate = RNA(n) + a ribonucleoside 5'-diphosphate. In terms of biological role, involved in mRNA degradation. Catalyzes the phosphorolysis of single-stranded polyribonucleotides processively in the 3'- to 5'-direction. This Chlamydia trachomatis serovar L2 (strain ATCC VR-902B / DSM 19102 / 434/Bu) protein is Polyribonucleotide nucleotidyltransferase.